The following is a 278-amino-acid chain: Digeranylgeranylglyceryl phosphate synthase (278 aa).

7 helical membrane-spanning segments follow: residues 12–32, 34–54, 92–112, 129–149, 199–219, 221–241, and 257–277; these read LKNC…ASNF, FGAL…CGFG, IMIF…MAVL, IIGN…GGIA, IYIS…PYLT, IFGI…LAGF, and SKNI…GSIF.

The protein belongs to the UbiA prenyltransferase family. DGGGP synthase subfamily. Mg(2+) serves as cofactor.

Its subcellular location is the cell membrane. It catalyses the reaction sn-3-O-(geranylgeranyl)glycerol 1-phosphate + (2E,6E,10E)-geranylgeranyl diphosphate = 2,3-bis-O-(geranylgeranyl)-sn-glycerol 1-phosphate + diphosphate. The protein operates within membrane lipid metabolism; glycerophospholipid metabolism. Its function is as follows. Prenyltransferase that catalyzes the transfer of the geranylgeranyl moiety of geranylgeranyl diphosphate (GGPP) to the C2 hydroxyl of (S)-3-O-geranylgeranylglyceryl phosphate (GGGP). This reaction is the second ether-bond-formation step in the biosynthesis of archaeal membrane lipids. The polypeptide is Digeranylgeranylglyceryl phosphate synthase (Methanococcus vannielii (strain ATCC 35089 / DSM 1224 / JCM 13029 / OCM 148 / SB)).